Here is a 243-residue protein sequence, read N- to C-terminus: Pyridoxine 5'-phosphate synthase (243 aa).

Asn9 is a binding site for 3-amino-2-oxopropyl phosphate. 11–12 lines the 1-deoxy-D-xylulose 5-phosphate pocket; that stretch reads DH. 3-amino-2-oxopropyl phosphate is bound at residue Arg20. Catalysis depends on His45, which acts as the Proton acceptor. Residues Arg47 and His52 each contribute to the 1-deoxy-D-xylulose 5-phosphate site. Glu72 functions as the Proton acceptor in the catalytic mechanism. Residue Thr102 coordinates 1-deoxy-D-xylulose 5-phosphate. His193 acts as the Proton donor in catalysis. Residues Gly194 and 215-216 each bind 3-amino-2-oxopropyl phosphate; that span reads GH.

Belongs to the PNP synthase family. In terms of assembly, homooctamer; tetramer of dimers.

It is found in the cytoplasm. It carries out the reaction 3-amino-2-oxopropyl phosphate + 1-deoxy-D-xylulose 5-phosphate = pyridoxine 5'-phosphate + phosphate + 2 H2O + H(+). It functions in the pathway cofactor biosynthesis; pyridoxine 5'-phosphate biosynthesis; pyridoxine 5'-phosphate from D-erythrose 4-phosphate: step 5/5. In terms of biological role, catalyzes the complicated ring closure reaction between the two acyclic compounds 1-deoxy-D-xylulose-5-phosphate (DXP) and 3-amino-2-oxopropyl phosphate (1-amino-acetone-3-phosphate or AAP) to form pyridoxine 5'-phosphate (PNP) and inorganic phosphate. This is Pyridoxine 5'-phosphate synthase from Aliivibrio fischeri (strain ATCC 700601 / ES114) (Vibrio fischeri).